The chain runs to 153 residues: Ribonuclease H (153 aa).

Residues 1–141 enclose the RNase H type-1 domain; it reads MKHIEIYTDG…CDVLARDAAS (141 aa). The Mg(2+) site is built by Asp-9, Glu-47, Asp-69, and Asp-133.

Belongs to the RNase H family. Monomer. Mg(2+) is required as a cofactor.

Its subcellular location is the cytoplasm. It catalyses the reaction Endonucleolytic cleavage to 5'-phosphomonoester.. Endonuclease that specifically degrades the RNA of RNA-DNA hybrids. The sequence is that of Ribonuclease H from Pseudoalteromonas atlantica (strain T6c / ATCC BAA-1087).